The following is a 72-amino-acid chain: Translation initiation factor IF-1 (72 aa).

The S1-like domain maps to M1–K72.

This sequence belongs to the IF-1 family. Component of the 30S ribosomal translation pre-initiation complex which assembles on the 30S ribosome in the order IF-2 and IF-3, IF-1 and N-formylmethionyl-tRNA(fMet); mRNA recruitment can occur at any time during PIC assembly.

It is found in the cytoplasm. One of the essential components for the initiation of protein synthesis. Stabilizes the binding of IF-2 and IF-3 on the 30S subunit to which N-formylmethionyl-tRNA(fMet) subsequently binds. Helps modulate mRNA selection, yielding the 30S pre-initiation complex (PIC). Upon addition of the 50S ribosomal subunit IF-1, IF-2 and IF-3 are released leaving the mature 70S translation initiation complex. The protein is Translation initiation factor IF-1 of Streptococcus agalactiae serotype Ia (strain ATCC 27591 / A909 / CDC SS700).